The chain runs to 350 residues: Quinone oxidoreductase-like protein 2 (350 aa).

Residue Lys-36 is modified to N6-acetyllysine. The residue at position 201 (Lys-201) is an N6-succinyllysine. N6-acetyllysine occurs at positions 302 and 328.

This sequence belongs to the zinc-containing alcohol dehydrogenase family. Quinone oxidoreductase subfamily.

In Mus musculus (Mouse), this protein is Quinone oxidoreductase-like protein 2.